We begin with the raw amino-acid sequence, 174 residues long: Chaperonin-like RBCX protein 1, chloroplastic (174 aa).

A chloroplast-targeting transit peptide spans Met1–Asn45.

This sequence belongs to the RbcX family. In terms of assembly, homodimer. Interacts with rbcL, atpB and THI1.

The protein localises to the plastid. The protein resides in the chloroplast. Chaperone involved in RuBisCO assembly process. This is Chaperonin-like RBCX protein 1, chloroplastic from Arabidopsis thaliana (Mouse-ear cress).